Here is a 603-residue protein sequence, read N- to C-terminus: Penicillin-binding protein activator LpoA (603 aa).

A signal peptide spans 1–26; sequence MANMTPRKNSVTRLIAPVALALTLAA. Cys-27 carries N-palmitoyl cysteine lipidation. Cys-27 carries S-diacylglycerol cysteine lipidation.

It belongs to the LpoA family. As to quaternary structure, interacts with PBP1a.

It localises to the cell outer membrane. In terms of biological role, regulator of peptidoglycan synthesis that is essential for the function of penicillin-binding protein 1A (PBP1a). In Aliivibrio fischeri (strain ATCC 700601 / ES114) (Vibrio fischeri), this protein is Penicillin-binding protein activator LpoA.